A 302-amino-acid polypeptide reads, in one-letter code: Digeranylgeranylglyceryl phosphate synthase (302 aa).

The next 8 helical transmembrane spans lie at 21–41 (LVVA…IYGG), 43–63 (IVSS…AGGY), 103–123 (IGLI…FAVL), 144–164 (IVIA…ASCM), 167–187 (GKVV…LLVL), 218–238 (AYMA…FPYI), 244–264 (MAYL…LAIL), and 282–302 (ARSA…AGLM).

This sequence belongs to the UbiA prenyltransferase family. DGGGP synthase subfamily. The cofactor is Mg(2+).

The protein localises to the cell membrane. The enzyme catalyses sn-3-O-(geranylgeranyl)glycerol 1-phosphate + (2E,6E,10E)-geranylgeranyl diphosphate = 2,3-bis-O-(geranylgeranyl)-sn-glycerol 1-phosphate + diphosphate. The protein operates within membrane lipid metabolism; glycerophospholipid metabolism. Functionally, prenyltransferase that catalyzes the transfer of the geranylgeranyl moiety of geranylgeranyl diphosphate (GGPP) to the C2 hydroxyl of (S)-3-O-geranylgeranylglyceryl phosphate (GGGP). This reaction is the second ether-bond-formation step in the biosynthesis of archaeal membrane lipids. In Hyperthermus butylicus (strain DSM 5456 / JCM 9403 / PLM1-5), this protein is Digeranylgeranylglyceryl phosphate synthase.